A 223-amino-acid polypeptide reads, in one-letter code: Phosphoribosylformylglycinamidine synthase subunit PurQ (223 aa).

Residues 4 to 223 (FAVVVFPGTN…FKGMVEWVRS (220 aa)) enclose the Glutamine amidotransferase type-1 domain. Cysteine 85 functions as the Nucleophile in the catalytic mechanism. Active-site residues include histidine 196 and glutamate 198.

In terms of assembly, part of the FGAM synthase complex composed of 1 PurL, 1 PurQ and 2 PurS subunits.

The protein resides in the cytoplasm. The catalysed reaction is N(2)-formyl-N(1)-(5-phospho-beta-D-ribosyl)glycinamide + L-glutamine + ATP + H2O = 2-formamido-N(1)-(5-O-phospho-beta-D-ribosyl)acetamidine + L-glutamate + ADP + phosphate + H(+). The enzyme catalyses L-glutamine + H2O = L-glutamate + NH4(+). It participates in purine metabolism; IMP biosynthesis via de novo pathway; 5-amino-1-(5-phospho-D-ribosyl)imidazole from N(2)-formyl-N(1)-(5-phospho-D-ribosyl)glycinamide: step 1/2. Part of the phosphoribosylformylglycinamidine synthase complex involved in the purines biosynthetic pathway. Catalyzes the ATP-dependent conversion of formylglycinamide ribonucleotide (FGAR) and glutamine to yield formylglycinamidine ribonucleotide (FGAM) and glutamate. The FGAM synthase complex is composed of three subunits. PurQ produces an ammonia molecule by converting glutamine to glutamate. PurL transfers the ammonia molecule to FGAR to form FGAM in an ATP-dependent manner. PurS interacts with PurQ and PurL and is thought to assist in the transfer of the ammonia molecule from PurQ to PurL. This is Phosphoribosylformylglycinamidine synthase subunit PurQ from Pyrococcus furiosus (strain ATCC 43587 / DSM 3638 / JCM 8422 / Vc1).